Reading from the N-terminus, the 194-residue chain is Molybdenum cofactor guanylyltransferase (194 aa).

Residues 12-14 (LAG), Lys25, Asp71, and Asp101 each bind GTP. Residue Asp101 participates in Mg(2+) binding.

Belongs to the MobA family. Monomer. It depends on Mg(2+) as a cofactor.

Its subcellular location is the cytoplasm. The enzyme catalyses Mo-molybdopterin + GTP + H(+) = Mo-molybdopterin guanine dinucleotide + diphosphate. Transfers a GMP moiety from GTP to Mo-molybdopterin (Mo-MPT) cofactor (Moco or molybdenum cofactor) to form Mo-molybdopterin guanine dinucleotide (Mo-MGD) cofactor. In Salmonella typhimurium (strain LT2 / SGSC1412 / ATCC 700720), this protein is Molybdenum cofactor guanylyltransferase.